We begin with the raw amino-acid sequence, 72 residues long: DNA-directed RNA polymerase subunit omega (72 aa).

Belongs to the RNA polymerase subunit omega family. The RNAP catalytic core consists of 2 alpha, 1 beta, 1 beta' and 1 omega subunit. When a sigma factor is associated with the core the holoenzyme is formed, which can initiate transcription.

The enzyme catalyses RNA(n) + a ribonucleoside 5'-triphosphate = RNA(n+1) + diphosphate. In terms of biological role, promotes RNA polymerase assembly. Latches the N- and C-terminal regions of the beta' subunit thereby facilitating its interaction with the beta and alpha subunits. In Staphylococcus aureus (strain Mu3 / ATCC 700698), this protein is DNA-directed RNA polymerase subunit omega.